The chain runs to 165 residues: MISDDTDQFNPRDAKSPEAAKGKSAKRREARQMATQALYQWHMAGHALNEIEAQFRVDNDFSNVDGAYFRELLHGVATNKTEIDTALSPCLDLTIEELDPVELAVLRLSTFELLKRIDVPYRVVINEGIELAKVYGSTDGHKFVNGVLDKLAPRLREVEVKAHKR.

Positions 1–27 (MISDDTDQFNPRDAKSPEAAKGKSAKR) are disordered. A compositionally biased stretch (basic and acidic residues) spans 10–21 (NPRDAKSPEAAK).

It belongs to the NusB family.

Its function is as follows. Involved in transcription antitermination. Required for transcription of ribosomal RNA (rRNA) genes. Binds specifically to the boxA antiterminator sequence of the ribosomal RNA (rrn) operons. The polypeptide is Transcription antitermination protein NusB (Pseudomonas savastanoi pv. phaseolicola (strain 1448A / Race 6) (Pseudomonas syringae pv. phaseolicola (strain 1448A / Race 6))).